The chain runs to 287 residues: Immunoglobulin alpha Fc receptor (287 aa).

An N-terminal signal peptide occupies residues 1 to 21 (MDPKQTTLLCLVLCLGQRIQA). Residues 22-227 (QEGDFPMPFI…SIHQDYTTQN (206 aa)) lie on the Extracellular side of the membrane. Ig-like C2-type domains follow at residues 42–107 (DGSV…IGHY) and 139–200 (GENI…YNRS). A disulfide bond links C49 and C100. 5 N-linked (GlcNAc...) asparagine glycosylation sites follow: N65, N79, N141, N177, and N186. A disulfide bridge connects residues C146 and C193. A helical membrane pass occupies residues 228–246 (LIRMAVAGLVLVALLAILV). The Cytoplasmic segment spans residues 247–287 (ENWHSHTALNKEASADVAEPSWSQQMCQPGLTFARTPSVCK).

In terms of assembly, associates with the Fc epsilon RI gamma 2 receptor inducing tyrosine phosphorylation of gamma 2. As to quaternary structure, (Microbial infection) Interacts with Staphylococcus aureus protein SSL11. As to expression, isoform A.1, isoform A.2 and isoform A.3 are differentially expressed between blood and mucosal myeloid cells. Isoform A.1, isoform A.2 and isoform A.3 are expressed in monocytes. Isoform A.1 and isoform A.2 are expressed in alveolar macrophages; however only one isoform is expressed at alveolar macrophages surfaces.

It is found in the cell membrane. The protein resides in the secreted. Its function is as follows. Binds to the Fc region of immunoglobulins alpha. Mediates several functions including cytokine production. The sequence is that of Immunoglobulin alpha Fc receptor (FCAR) from Homo sapiens (Human).